We begin with the raw amino-acid sequence, 255 residues long: Putative esterase YitV (255 aa).

The sequence is that of Putative esterase YitV (yitV) from Bacillus subtilis (strain 168).